Consider the following 407-residue polypeptide: Tryptophan synthase beta chain (407 aa).

At K86 the chain carries N6-(pyridoxal phosphate)lysine.

It belongs to the TrpB family. As to quaternary structure, tetramer of two alpha and two beta chains. Pyridoxal 5'-phosphate serves as cofactor.

It carries out the reaction (1S,2R)-1-C-(indol-3-yl)glycerol 3-phosphate + L-serine = D-glyceraldehyde 3-phosphate + L-tryptophan + H2O. The protein operates within amino-acid biosynthesis; L-tryptophan biosynthesis; L-tryptophan from chorismate: step 5/5. The beta subunit is responsible for the synthesis of L-tryptophan from indole and L-serine. In Shewanella woodyi (strain ATCC 51908 / MS32), this protein is Tryptophan synthase beta chain.